Consider the following 57-residue polypeptide: Ribulose bisphosphate carboxylase large chain (57 aa).

Residues 1–2 constitute a propeptide that is removed on maturation; sequence MS. Residue proline 3 is modified to N-acetylproline. Residue lysine 14 is modified to N6,N6,N6-trimethyllysine.

It belongs to the RuBisCO large chain family. Type I subfamily. As to quaternary structure, heterohexadecamer of 8 large chains and 8 small chains.

Its subcellular location is the plastid. The protein resides in the chloroplast. The enzyme catalyses 2 (2R)-3-phosphoglycerate + 2 H(+) = D-ribulose 1,5-bisphosphate + CO2 + H2O. It carries out the reaction D-ribulose 1,5-bisphosphate + O2 = 2-phosphoglycolate + (2R)-3-phosphoglycerate + 2 H(+). Functionally, ruBisCO catalyzes two reactions: the carboxylation of D-ribulose 1,5-bisphosphate, the primary event in carbon dioxide fixation, as well as the oxidative fragmentation of the pentose substrate in the photorespiration process. Both reactions occur simultaneously and in competition at the same active site. The polypeptide is Ribulose bisphosphate carboxylase large chain (rbcL) (Buxus sempervirens (Common box)).